A 265-amino-acid polypeptide reads, in one-letter code: Undecaprenyl-diphosphatase (265 aa).

The next 7 membrane-spanning stretches (helical) occupy residues 38 to 58 (SDMF…IIYW), 80 to 100 (LIVA…LGFE), 107 to 127 (PIAW…WAAA), 135 to 155 (ITWL…VFPG), 178 to 198 (TEFA…YELL), 216 to 236 (IAFV…LAYI), and 244 to 264 (FAIY…TGLI).

The protein belongs to the UppP family.

It localises to the cell inner membrane. It carries out the reaction di-trans,octa-cis-undecaprenyl diphosphate + H2O = di-trans,octa-cis-undecaprenyl phosphate + phosphate + H(+). Functionally, catalyzes the dephosphorylation of undecaprenyl diphosphate (UPP). Confers resistance to bacitracin. The sequence is that of Undecaprenyl-diphosphatase from Rhizobium johnstonii (strain DSM 114642 / LMG 32736 / 3841) (Rhizobium leguminosarum bv. viciae).